Consider the following 339-residue polypeptide: Anthranilate phosphoribosyltransferase (339 aa).

5-phospho-alpha-D-ribose 1-diphosphate contacts are provided by residues Gly79, 82-83 (GD), Thr87, 89-92 (NIST), 107-115 (KHGNRAVSS), and Ser119. Gly79 provides a ligand contact to anthranilate. Residue Ser91 coordinates Mg(2+). Asn110 is a binding site for anthranilate. Arg165 serves as a coordination point for anthranilate. 2 residues coordinate Mg(2+): Asp224 and Glu225.

This sequence belongs to the anthranilate phosphoribosyltransferase family. In terms of assembly, homodimer. The cofactor is Mg(2+).

It carries out the reaction N-(5-phospho-beta-D-ribosyl)anthranilate + diphosphate = 5-phospho-alpha-D-ribose 1-diphosphate + anthranilate. The protein operates within amino-acid biosynthesis; L-tryptophan biosynthesis; L-tryptophan from chorismate: step 2/5. Functionally, catalyzes the transfer of the phosphoribosyl group of 5-phosphorylribose-1-pyrophosphate (PRPP) to anthranilate to yield N-(5'-phosphoribosyl)-anthranilate (PRA). This is Anthranilate phosphoribosyltransferase from Geobacillus thermodenitrificans (strain NG80-2).